The sequence spans 192 residues: Peroxiredoxin tpx1 (192 aa).

Positions 3–161 (LQIGKPAPDF…ALRLLDAFQF (159 aa)) constitute a Thioredoxin domain. The active-site Cysteine sulfenic acid (-SOH) intermediate is the Cys48. Phosphoserine is present on residues Ser105 and Ser148.

The protein belongs to the peroxiredoxin family. AhpC/Prx1 subfamily. In terms of assembly, homodimer; disulfide-linked, upon oxidation. Interacts with srx1 in response to oxidative stress. Interacts with pap1 via transient disulfide linkages. The enzyme can be inactivated by further oxidation of the cysteine sulfenic acid (C(P)-SOH) to sulphinic acid (C(P)-SO2H) instead of its condensation to a disulfide bond. It can be reactivated by forming a transient disulfide bond with sulfiredoxin srx1, which reduces the cysteine sulfinic acid in an ATP- and Mg-dependent manner.

It localises to the cytoplasm. It is found in the nucleus. The enzyme catalyses a hydroperoxide + [thioredoxin]-dithiol = an alcohol + [thioredoxin]-disulfide + H2O. Thiol-specific peroxidase that catalyzes the reduction of hydrogen peroxide and organic hydroperoxides to water and alcohols, respectively. Plays a role in cell protection against oxidative stress by detoxifying peroxides and as sensor of hydrogen peroxide-mediated signaling events. Relays hydrogen peroxide as a signal to the transcription factor pap1 by inducing the formation of intramolecular disulfide bonds in pap1, which causes its nuclear accumulation and activation. Reduced by srx1 and this regulation acts as a molecular switch controlling the transcriptional response to hydrogen peroxide. The sequence is that of Peroxiredoxin tpx1 (tpx1) from Schizosaccharomyces pombe (strain 972 / ATCC 24843) (Fission yeast).